A 1693-amino-acid polypeptide reads, in one-letter code: Non-structural polyprotein pORF1 (1693 aa).

An Alphavirus-like MT domain is found at 56–240 (VFRPEVFWNH…HDVSNLRSWI (185 aa)). The segment at 60 to 240 (EVFWNHPIQR…HDVSNLRSWI (181 aa)) is methyltransferase. Residues 241–439 (RTTKVTGDHP…FYAQCRRWLS (199 aa)) are Y-domain. The cysteines at positions 434 and 481 are disulfide-linked. Residues 442–509 (FHLDPRVLVF…EAYEGSDVDP (68 aa)) form a putative protease region. A zinc-binding region spans residues 510 to 691 (AESAISDISG…FSPGHVWESA (182 aa)). The Zn(2+) site is built by histidine 671, glutamate 673, and histidine 686. Residues 712 to 778 (SSPARPDLGL…AITHQTARHR (67 aa)) are hinge. A disordered region spans residues 737 to 769 (AVLLPPPAPDPPPPPSAPALDEPASGATAGAPA). Pro residues predominate over residues 740-753 (LPPPAPDPPPPPSA). The Macro domain maps to 775–921 (ARHRRLLFTY…LYLPELAARW (147 aa)). The segment at 785 to 942 (PDGSKVFAGS…TITEDVARTA (158 aa)) is X-domain. The (+)RNA virus helicase ATP-binding domain occupies 934–1082 (ITEDVARTAN…RPDLGPTSWW (149 aa)). The segment at 960–1204 (GCRVTPGVVQ…ISDAIVNNFF (245 aa)) is NTPase/helicase. Residue 975 to 982 (GVPGSGKS) coordinates ATP. Residues 1083 to 1216 (HVTHRCPADV…GGEIGHQRPS (134 aa)) form the (+)RNA virus helicase C-terminal domain. The tract at residues 1207 to 1693 (GGEIGHQRPS…LTNSILCRVE (487 aa)) is RNA-directed RNA polymerase. Residues 1454–1565 (SMVFENDFSE…LCSEYRQSPG (112 aa)) enclose the RdRp catalytic domain.

This sequence belongs to the hepevirus non-structural polyprotein family. In terms of assembly, the protease domain interacts with host EIF2AK4 (via C-terminus); this interaction inhibits dimerization of EIF2AK4 and prevents EIF2AK4-mediated phosphorylation of host EIF2A. It depends on Mg(2+) as a cofactor. ORF1 polyprotein does not seem to be processed into distinct enzymatic domains by a viral protease belonging to ORF1, but could be processed by a host serine protease like thrombin.

The protein localises to the host cytoplasm. It localises to the host perinuclear region. It catalyses the reaction RNA(n) + a ribonucleoside 5'-triphosphate = RNA(n+1) + diphosphate. It carries out the reaction GTP + S-adenosyl-L-methionine = N(7)-methyl-GTP + S-adenosyl-L-homocysteine. With respect to regulation, putative protease: Inhibited by chymostatin. Its function is as follows. Methyltransferase: Displays a capping enzyme activity. This function is necessary since all viral RNAs are synthesized in the cytoplasm, and host capping enzymes are restricted to the nucleus. The enzymatic reaction involves a covalent link between 7-methyl-GMP and the methyltransferase, whereas eukaryotic capping enzymes form a covalent complex only with GMP. Methyltransferase catalyzes transfer of a methyl group from S-adenosylmethionine to GTP and GDP to yield m(7)GTP or m(7)GDP. GDP is a better substrate than GTP. This enzyme also displays guanylyltransferase activity to form a covalent complex, methyltransferase-m(7)GMP, from which 7-methyl-GMP is transferred to the mRNA to create the cap structure. In terms of biological role, Y-domain: Indispensable for virus replication. Putative protease: The putative protease domain although necessary for replication of the virus may not be a protease but rather a structural Zn(2+)-binding domain. Inhibits induction of IFN-beta by MDA5 and RIG-I pathways and down-regulates the expression of MDA5. Functionally, NTPase/helicase: Multi-functional protein that exhibits NTPase and RNA unwinding activities. Hydrolyzes all NTPs efficiently and unwinds RNA duplexes containing 5' overhangs. Possesses a sequence independent RNA-5'-triphosphatase (RTPase) activity suggestive of its role in forming viral cap structure. Also participates in viral genome replication, RNA translocation and genome packaging/unpackaging. Its function is as follows. RNA-directed RNA polymerase: Plays an essential role in the virus replication. Binds to the 3'-end of the genomic RNA to initiate viral replication. The protein is Non-structural polyprotein pORF1 of Hepatitis E virus genotype 1 (isolate Human/Myanmar/HEVNE8L) (HEV-1).